A 253-amino-acid polypeptide reads, in one-letter code: MTEPTFAAADTDLLTEPRLVVEPGVAARVAAVAEPVLQGMGYRLVRIRISGEAGCTVQVMAERPDGTMQIEDCEAVSRALSPVLDIADPIDRAYRLEISSPGIDRPLVRRTDFERHIGHLVKIEMAVAHQNRKRFRGIITGLDGDGVCITRDDVAKDQDPSVVLPMTDIGDAKLVLTDELIAESMRRGKAAEREKKRDLGLAPPLAPHAKPAAQAKPKPKLKDGQAAKKPLPTNTKKHRLAADRARRGEIDPD.

Basic and acidic residues predominate over residues 186 to 199 (RRGKAAEREKKRDL). The tract at residues 186-253 (RRGKAAEREK…RARRGEIDPD (68 aa)) is disordered. Residues 201 to 216 (LAPPLAPHAKPAAQAK) show a composition bias toward low complexity. Over residues 240-253 (LAADRARRGEIDPD) the composition is skewed to basic and acidic residues.

Belongs to the RimP family.

It localises to the cytoplasm. In terms of biological role, required for maturation of 30S ribosomal subunits. The protein is Ribosome maturation factor RimP of Bradyrhizobium sp. (strain BTAi1 / ATCC BAA-1182).